Reading from the N-terminus, the 58-residue chain is Keratin-associated protein 19-9b (58 aa).

Residues 6 to 52 form a 12 X 2 AA repeats of G-[YCGS] region; the sequence is GNYYGGLGYGLGGFGGFGGLGYGYGSSYGLGGYGGYGYFSPSFYGGY.

This sequence belongs to the KRTAP type 19 family. As to quaternary structure, interacts with hair keratins.

In the hair cortex, hair keratin intermediate filaments are embedded in an interfilamentous matrix, consisting of hair keratin-associated proteins (KRTAP), which are essential for the formation of a rigid and resistant hair shaft through their extensive disulfide bond cross-linking with abundant cysteine residues of hair keratins. The matrix proteins include the high-sulfur and high-glycine-tyrosine keratins. The chain is Keratin-associated protein 19-9b (Krtap19-9b) from Mus musculus (Mouse).